We begin with the raw amino-acid sequence, 883 residues long: uncharacterized protein (883 aa).

The interval isoleucine 258–proline 373 is disordered. 3 stretches are compositionally biased toward low complexity: residues asparagine 259–serine 268, glutamate 277–glutamate 317, and asparagine 324–glutamate 333. Polar residues predominate over residues serine 334 to aspartate 347. The span at asparagine 348 to lysine 368 shows a compositional bias: low complexity.

The protein belongs to the mimivirus L137 family.

This is an uncharacterized protein from Acanthamoeba polyphaga mimivirus (APMV).